A 334-amino-acid polypeptide reads, in one-letter code: tRNA-dihydrouridine synthase B (334 aa).

FMN contacts are provided by residues 16–18 and Q70; that span reads PMA. The Proton donor role is filled by C100. Residues K139, 200 to 202, and 224 to 225 each bind FMN; these read NGD and GR.

This sequence belongs to the Dus family. DusB subfamily. FMN serves as cofactor.

The catalysed reaction is a 5,6-dihydrouridine in tRNA + NAD(+) = a uridine in tRNA + NADH + H(+). It catalyses the reaction a 5,6-dihydrouridine in tRNA + NADP(+) = a uridine in tRNA + NADPH + H(+). Catalyzes the synthesis of 5,6-dihydrouridine (D), a modified base found in the D-loop of most tRNAs, via the reduction of the C5-C6 double bond in target uridines. The protein is tRNA-dihydrouridine synthase B of Serratia marcescens.